The primary structure comprises 306 residues: N-acetylmuramic acid 6-phosphate etherase (306 aa).

The SIS domain occupies 60–223 (TAAALRGGGR…STGAMVRLGK (164 aa)). Glu-88 (proton donor) is an active-site residue. Glu-119 is a catalytic residue.

This sequence belongs to the GCKR-like family. MurNAc-6-P etherase subfamily. As to quaternary structure, homodimer.

The enzyme catalyses N-acetyl-D-muramate 6-phosphate + H2O = N-acetyl-D-glucosamine 6-phosphate + (R)-lactate. Its pathway is amino-sugar metabolism; N-acetylmuramate degradation. In terms of biological role, specifically catalyzes the cleavage of the D-lactyl ether substituent of MurNAc 6-phosphate, producing GlcNAc 6-phosphate and D-lactate. This chain is N-acetylmuramic acid 6-phosphate etherase, found in Gloeobacter violaceus (strain ATCC 29082 / PCC 7421).